A 370-amino-acid chain; its full sequence is 3-dehydroquinate synthase (370 aa).

NAD(+) contacts are provided by residues 70-75, 104-108, 128-129, Lys141, Lys150, and 168-171; these read DAEDGK, GAATD, TT, and TLET. Zn(2+)-binding residues include Glu183, His246, and His262.

The protein belongs to the sugar phosphate cyclases superfamily. Dehydroquinate synthase family. Co(2+) serves as cofactor. Requires Zn(2+) as cofactor. NAD(+) is required as a cofactor.

Its subcellular location is the cytoplasm. The enzyme catalyses 7-phospho-2-dehydro-3-deoxy-D-arabino-heptonate = 3-dehydroquinate + phosphate. The protein operates within metabolic intermediate biosynthesis; chorismate biosynthesis; chorismate from D-erythrose 4-phosphate and phosphoenolpyruvate: step 2/7. Its function is as follows. Catalyzes the conversion of 3-deoxy-D-arabino-heptulosonate 7-phosphate (DAHP) to dehydroquinate (DHQ). The polypeptide is 3-dehydroquinate synthase (Rhodococcus opacus (strain B4)).